The following is a 52-amino-acid chain: Inducible serine protease inhibitor 2 (52 aa).

The region spanning 5–52 (CTLPLETGICRAELHRFGYDTKLKECTQFVYGGCHHNENNFKKLEVCR) is the BPTI/Kunitz inhibitor domain. 2 disulfides stabilise this stretch: Cys14–Cys38 and Cys30–Cys51.

In terms of biological role, inhibits trypsin and the toxin protease PR2 of M.anisopliae. Does not inhibit chymotrypsin, subtilisin Carlsberg, proteinase K, porcine pancreatic elastase and the toxin protease PR1 of M.anisopliae. The chain is Inducible serine protease inhibitor 2 from Galleria mellonella (Greater wax moth).